We begin with the raw amino-acid sequence, 196 residues long: Interleukin-23 subunit alpha (196 aa).

The N-terminal stretch at 1–21 (MLDCRAVIMLWLLPWVTQGLA) is a signal peptide.

Belongs to the IL-6 superfamily. As to quaternary structure, heterodimer with IL12B; disulfide-linked. The heterodimer is known as interleukin IL-23. Interacts with IL23R; this interaction enables recruitment of IL12RB1. Secreted by activated dendritic cells (at protein level). Detected in various tissues with higher expression in polarized Th1 cells and activated macrophages.

The protein localises to the secreted. Functionally, associates with IL12B to form the IL-23 interleukin, a heterodimeric cytokine which functions in innate and adaptive immunity. IL-23 may constitute with IL-17 an acute response to infection in peripheral tissues. IL-23 binds to a heterodimeric receptor complex composed of IL12RB1 and IL23R, activates the Jak-Stat signaling cascade, stimulates memory rather than naive T-cells and promotes production of pro-inflammatory cytokines. IL-23 induces autoimmune inflammation and thus may be responsible for autoimmune inflammatory diseases and may be important for tumorigenesis. Its function is as follows. Associates with IL12B to form the pro-inflammatory cytokine IL-23 that plays different roles in innate and adaptive immunity. Released by antigen-presenting cells such as dendritic cells or macrophages, binds to a heterodimeric receptor complex composed of IL12RB1 and IL23R to activate JAK2 and TYK2 which then phosphorylate the receptor to form a docking site leading to the phosphorylation of STAT3 and STAT4. This process leads to activation of several pathways including p38 MAPK or NF-kappa-B and promotes the production of pro-inflammatory cytokines such as interleukin-17A/IL17A. In turn, participates in the early and effective intracellular bacterial clearance. Promotes the expansion and survival of T-helper 17 cells, a CD4-positive helper T-cell subset that produces IL-17, as well as other IL-17-producing cells. The sequence is that of Interleukin-23 subunit alpha (Il23a) from Mus musculus (Mouse).